The sequence spans 219 residues: Histone H1.4 (219 aa).

Over residues 1-15 (MSETAPAAPAAPAPA) the composition is skewed to low complexity. The tract at residues 1–41 (MSETAPAAPAAPAPAEKTPVKKKARKSAGAAKRKASGPPVS) is disordered. The residue at position 2 (Ser-2) is an N-acetylserine. Ser-2 carries the post-translational modification Phosphoserine. Lys-17 carries the post-translational modification N6-acetyllysine. The residue at position 18 (Thr-18) is a Phosphothreonine. The span at 20-35 (VKKKARKSAGAAKRKA) shows a compositional bias: basic residues. Residue Lys-26 is modified to N6-acetyllysine; alternate. An N6-methyllysine; alternate modification is found at Lys-26. At Lys-34 the chain carries N6-(beta-hydroxybutyryl)lysine; alternate. N6-succinyllysine; alternate is present on Lys-34. Position 36 is a phosphoserine (Ser-36). Positions 36-109 (SGPPVSELIT…GASGSFKLNK (74 aa)) constitute an H15 domain. At Lys-52 the chain carries N6-(beta-hydroxybutyryl)lysine. Citrulline is present on Arg-54. An N6-(beta-hydroxybutyryl)lysine mark is found at Lys-64, Lys-85, Lys-90, and Lys-106. Residues 92-219 (TLVQTKGTGA…KPKKAAAKKK (128 aa)) are disordered. The span at 119-140 (KAKKAGAAKAKKPAGAAKKPKK) shows a compositional bias: basic residues. Thr-146 carries the post-translational modification Phosphothreonine. Composition is skewed to basic residues over residues 149-160 (KSAKKTPKKAKK) and 168-185 (KKAKSPKKAKAAKPKKAP). Ser-150 is modified (ADP-ribosylserine). Ser-187 is subject to Phosphoserine. A compositionally biased stretch (basic residues) spans 192-219 (KAVKPKAAKPKTAKPKAAKPKKAAAKKK).

The protein belongs to the histone H1/H5 family. In terms of processing, H1 histones are progressively phosphorylated during the cell cycle, becoming maximally phosphorylated during late G2 phase and M phase, and being dephosphorylated sharply thereafter. Acetylated at Lys-26. Deacetylated at Lys-26 by SIRT1. Post-translationally, citrullination at Arg-54 (H1R54ci) by PADI4 takes place within the DNA-binding site of H1 and results in its displacement from chromatin and global chromatin decondensation, thereby promoting pluripotency and stem cell maintenance. In terms of processing, ADP-ribosylated on Ser-150 in response to DNA damage.

It localises to the nucleus. Its subcellular location is the chromosome. Its function is as follows. Histone H1 protein binds to linker DNA between nucleosomes forming the macromolecular structure known as the chromatin fiber. Histones H1 are necessary for the condensation of nucleosome chains into higher-order structured fibers. Also acts as a regulator of individual gene transcription through chromatin remodeling, nucleosome spacing and DNA methylation. This Homo sapiens (Human) protein is Histone H1.4.